Reading from the N-terminus, the 140-residue chain is Large ribosomal subunit protein uL13 (140 aa).

The protein belongs to the universal ribosomal protein uL13 family. As to quaternary structure, part of the 50S ribosomal subunit.

Functionally, this protein is one of the early assembly proteins of the 50S ribosomal subunit, although it is not seen to bind rRNA by itself. It is important during the early stages of 50S assembly. This Methanosarcina mazei (strain ATCC BAA-159 / DSM 3647 / Goe1 / Go1 / JCM 11833 / OCM 88) (Methanosarcina frisia) protein is Large ribosomal subunit protein uL13.